Reading from the N-terminus, the 644-residue chain is uncharacterized protein (644 aa).

2 disordered regions span residues 1–35 (MSSHDDDHTPLLISDPSVNKPFRSRTPSPEREYCS) and 48–106 (GNSH…SHHN). At serine 28 the chain carries Phosphoserine. Positions 58 to 70 (NGASSSNNNVAKS) are enriched in low complexity. The span at 83 to 106 (YDSTSNSNEPISFNEPDSSNSHHN) shows a compositional bias: polar residues. Helical transmembrane passes span 131 to 151 (ILPLNFINAFSWGMIEIPLLF), 190 to 210 (AAFGSLAAFLGLFSTAYYGTM), 218 to 238 (LVLFITVSFLLLGDLWLLYQS), 245 to 265 (YFVLFAAALKGLGGYISTVVA), 286 to 306 (LNFAAYHLGTALGPSLSGFIV), 314 to 334 (YVFYITSTFWIIYLLYVWLIL), 398 to 418 (VLLAAILISLTLLGAGSMGLL), 435 to 455 (LILSTDSFASSITLVALFPLL), 522 to 542 (VWNAQLGYAIALSAAVLLAVA), 546 to 566 (VALFTAVIIQAISNMVVPCVQ), 583 to 603 (AAFAVFEAVALIIRGPIYAFV), and 614 to 634 (NMIFFLSAVIYGCCFIIIFFM).

It localises to the membrane. This is an uncharacterized protein from Schizosaccharomyces pombe (strain 972 / ATCC 24843) (Fission yeast).